Here is a 998-residue protein sequence, read N- to C-terminus: Bifunctional glutamine synthetase adenylyltransferase/adenylyl-removing enzyme (998 aa).

Positions 1–487 are adenylyl removase; that stretch reads MVVTKPATQR…LHAKLFYQPL (487 aa). The adenylyl transferase stretch occupies residues 492-998; it reads GPAGLEIRHG…KAVVCKVFGS (507 aa).

It belongs to the GlnE family. Mg(2+) serves as cofactor.

The enzyme catalyses [glutamine synthetase]-O(4)-(5'-adenylyl)-L-tyrosine + phosphate = [glutamine synthetase]-L-tyrosine + ADP. The catalysed reaction is [glutamine synthetase]-L-tyrosine + ATP = [glutamine synthetase]-O(4)-(5'-adenylyl)-L-tyrosine + diphosphate. Involved in the regulation of glutamine synthetase GlnA, a key enzyme in the process to assimilate ammonia. When cellular nitrogen levels are high, the C-terminal adenylyl transferase (AT) inactivates GlnA by covalent transfer of an adenylyl group from ATP to specific tyrosine residue of GlnA, thus reducing its activity. Conversely, when nitrogen levels are low, the N-terminal adenylyl removase (AR) activates GlnA by removing the adenylyl group by phosphorolysis, increasing its activity. The regulatory region of GlnE binds the signal transduction protein PII (GlnB) which indicates the nitrogen status of the cell. This is Bifunctional glutamine synthetase adenylyltransferase/adenylyl-removing enzyme from Mycolicibacterium paratuberculosis (strain ATCC BAA-968 / K-10) (Mycobacterium paratuberculosis).